The following is a 259-amino-acid chain: Aliphatic sulfonates import ATP-binding protein SsuB 1 (259 aa).

Residues 15 to 229 enclose the ABC transporter domain; the sequence is VECRRITRRF…QASTPGFQAL (215 aa). Residue 47-54 coordinates ATP; it reads GSSGSGKT.

This sequence belongs to the ABC transporter superfamily. Aliphatic sulfonates importer (TC 3.A.1.17.2) family. As to quaternary structure, the complex is composed of two ATP-binding proteins (SsuB), two transmembrane proteins (SsuC) and a solute-binding protein (SsuA).

Its subcellular location is the cell inner membrane. It catalyses the reaction ATP + H2O + aliphatic sulfonate-[sulfonate-binding protein]Side 1 = ADP + phosphate + aliphatic sulfonateSide 2 + [sulfonate-binding protein]Side 1.. Functionally, part of the ABC transporter complex SsuABC involved in aliphatic sulfonates import. Responsible for energy coupling to the transport system. This is Aliphatic sulfonates import ATP-binding protein SsuB 1 from Pseudomonas fluorescens (strain ATCC BAA-477 / NRRL B-23932 / Pf-5).